A 160-amino-acid chain; its full sequence is Cytochrome b6-f complex subunit 4 (160 aa).

The next 3 helical transmembrane spans lie at 36–56 (LLYI…GLAV), 95–115 (LLGV…PFLE), and 131–151 (TVFL…TLPI).

The protein belongs to the cytochrome b family. PetD subfamily. In terms of assembly, the 4 large subunits of the cytochrome b6-f complex are cytochrome b6, subunit IV (17 kDa polypeptide, petD), cytochrome f and the Rieske protein, while the 4 small subunits are petG, petL, petM and petN. The complex functions as a dimer.

The protein localises to the plastid. It localises to the chloroplast thylakoid membrane. In terms of biological role, component of the cytochrome b6-f complex, which mediates electron transfer between photosystem II (PSII) and photosystem I (PSI), cyclic electron flow around PSI, and state transitions. The chain is Cytochrome b6-f complex subunit 4 from Solanum bulbocastanum (Wild potato).